Consider the following 200-residue polypeptide: Transcription factor FapR (200 aa).

The protein belongs to the FapR family.

In terms of biological role, transcriptional factor involved in regulation of membrane lipid biosynthesis by repressing genes involved in fatty acid and phospholipid metabolism. This is Transcription factor FapR from Caldanaerobacter subterraneus subsp. tengcongensis (strain DSM 15242 / JCM 11007 / NBRC 100824 / MB4) (Thermoanaerobacter tengcongensis).